Reading from the N-terminus, the 447-residue chain is MKTPKVGFVSLGCPKALVDSERILTQLKTEGYQVASDYDGADLVVVNTCGFIESAVQESLDAIGEAMSENGRVIVTGCLGKDEDKIRQMHPNVLKVTGAAAYQDVMEAVHEYVPAPPKHNPFIDLVPEQGIRLTPKHYAYLKISEGCNHRCTFCIIPSMRGDLVSRPVGSVLEEAAALKRAGVKEILVISQDTSAYGVDTKYKLDFWNGQPVKTKFFDMCEALGQLGIWVRLHYVYPYPHVDAVIDLMAQGKILPYLDIPFQHASPRVLKLMKRPAHSENTLEKIKLWREKCPDLVIRSTFVVGFPGETEEDFQILLDWLVEAQLDRVGCFTYSPVEGATANDLPDHVPEEIKQERYERFMQVQQQISAAKLQKRIGQTMTVLVDSLEDEYPVAVARSYADAPEIDGNVFVEDIDKSTIQPGDMLEVEITDADEYDLFAKLIKIKSV.

An MTTase N-terminal domain is found at 4-114; that stretch reads PKVGFVSLGC…VMEAVHEYVP (111 aa). Cys13, Cys49, Cys78, Cys147, Cys151, and Cys154 together coordinate [4Fe-4S] cluster. Residues 133 to 370 enclose the Radical SAM core domain; that stretch reads LTPKHYAYLK…MQVQQQISAA (238 aa). The TRAM domain maps to 373-443; it reads QKRIGQTMTV…EYDLFAKLIK (71 aa).

Belongs to the methylthiotransferase family. RimO subfamily. [4Fe-4S] cluster is required as a cofactor.

It is found in the cytoplasm. It catalyses the reaction L-aspartate(89)-[ribosomal protein uS12]-hydrogen + (sulfur carrier)-SH + AH2 + 2 S-adenosyl-L-methionine = 3-methylsulfanyl-L-aspartate(89)-[ribosomal protein uS12]-hydrogen + (sulfur carrier)-H + 5'-deoxyadenosine + L-methionine + A + S-adenosyl-L-homocysteine + 2 H(+). Its function is as follows. Catalyzes the methylthiolation of an aspartic acid residue of ribosomal protein uS12. This Acinetobacter baumannii (strain SDF) protein is Ribosomal protein uS12 methylthiotransferase RimO.